The sequence spans 178 residues: Peptide deformylase (178 aa).

The Fe cation site is built by cysteine 102 and histidine 144. Glutamate 145 is an active-site residue. Residue histidine 148 participates in Fe cation binding.

The protein belongs to the polypeptide deformylase family. Requires Fe(2+) as cofactor.

It catalyses the reaction N-terminal N-formyl-L-methionyl-[peptide] + H2O = N-terminal L-methionyl-[peptide] + formate. Functionally, removes the formyl group from the N-terminal Met of newly synthesized proteins. Requires at least a dipeptide for an efficient rate of reaction. N-terminal L-methionine is a prerequisite for activity but the enzyme has broad specificity at other positions. The sequence is that of Peptide deformylase from Leptospira borgpetersenii serovar Hardjo-bovis (strain JB197).